The sequence spans 697 residues: Zinc finger protein 12 (697 aa).

Residue lysine 3 forms a Glycyl lysine isopeptide (Lys-Gly) (interchain with G-Cter in SUMO2) linkage. A KRAB domain is found at 8–79; the sequence is VSFKDVAVDF…EGEFLLQSYP (72 aa). Glycyl lysine isopeptide (Lys-Gly) (interchain with G-Cter in SUMO2) cross-links involve residues lysine 98, lysine 179, lysine 182, lysine 209, lysine 215, lysine 224, lysine 239, and lysine 267. 2 consecutive C2H2-type zinc fingers follow at residues 269-291 and 297-319; these read YECSECGKSFCKKSKFIIHQRTH and YECNQCGKSFCQKGTLTVHQRTH. Residues lysine 309, lysine 323, lysine 337, and lysine 365 each participate in a glycyl lysine isopeptide (Lys-Gly) (interchain with G-Cter in SUMO2) cross-link. 8 consecutive C2H2-type zinc fingers follow at residues 325 to 347, 353 to 375, 381 to 403, 409 to 431, 437 to 459, 465 to 487, 493 to 515, and 521 to 543; these read YECNECGKNFYQKLHLIQHQRTH, YECSYCGKSFCQKTHLTQHQRTH, YVCHDCGKTFSQKSALNDHQKIH, YKCSECGKCFCRKSTLTTHLRTH, YECNECGKFFSRLSYLTVHYRTH, YECNECGKTFYLNSALMRHQRVH, YECNECGKLFSQLSYLTIHHRTH, and YECSECGKTFYQNSALCRHRRIH. Glycyl lysine isopeptide (Lys-Gly) (interchain with G-Cter in SUMO2) cross-links involve residues lysine 544 and lysine 547. C2H2-type zinc fingers lie at residues 549 to 571, 577 to 599, 605 to 627, 633 to 655, and 661 to 683; these read YECYICGKFFSQMSYLTIHHRIH, YECSECGKTFCQNSALNRHQRTH, YECYECGKCFSQMSYLTIHHRIH, FECNECGKAFSRMSYLTVHYRTH, and YECTECGKKFYHKSAFNSHQRIH.

Belongs to the krueppel C2H2-type zinc-finger protein family. As to expression, widely expressed in various adult tissues and embryonic developmental stages (isoform 3).

The protein localises to the nucleus. In terms of biological role, transcriptional repressor which suppresses activation protein 1 (AP-1)- and serum response element (SRE)-mediated transcriptional activity. This is Zinc finger protein 12 (ZNF12) from Homo sapiens (Human).